The primary structure comprises 129 residues: uncharacterized protein (129 aa).

The segment covering 1–13 (MSDVAETVVAQEP) has biased composition (low complexity). The tract at residues 1–129 (MSDVAETVVA…SGDAPAVAAE (129 aa)) is disordered. Basic and acidic residues predominate over residues 34-94 (IDEKTSEQNG…KRVSSAHEEA (61 aa)). The segment covering 117–129 (VAASGDAPAVAAE) has biased composition (low complexity).

This is an uncharacterized protein from Caenorhabditis elegans.